We begin with the raw amino-acid sequence, 626 residues long: tRNA uridine 5-carboxymethylaminomethyl modification enzyme MnmG (626 aa).

FAD is bound at residue 14–19 (GAGHAG). 273–287 (GPRYCPSIEDKVVRF) provides a ligand contact to NAD(+).

The protein belongs to the MnmG family. As to quaternary structure, homodimer. Heterotetramer of two MnmE and two MnmG subunits. Requires FAD as cofactor.

The protein resides in the cytoplasm. Its function is as follows. NAD-binding protein involved in the addition of a carboxymethylaminomethyl (cmnm) group at the wobble position (U34) of certain tRNAs, forming tRNA-cmnm(5)s(2)U34. The protein is tRNA uridine 5-carboxymethylaminomethyl modification enzyme MnmG of Caldicellulosiruptor saccharolyticus (strain ATCC 43494 / DSM 8903 / Tp8T 6331).